A 1069-amino-acid polypeptide reads, in one-letter code: Thyrotropin-releasing hormone-degrading ectoenzyme (1069 aa).

Residues 1-11 show a composition bias toward acidic residues; sequence MALDGELGEQE. The disordered stretch occupies residues 1–46; that stretch reads MALDGELGEQEEEKKKKKKKKRKKKKEEEEEEEGAEKSSSPFAAAM. Residues 1–85 are Cytoplasmic-facing; the sequence is MALDGELGEQ…ERHIAVHKRL (85 aa). Positions 15-25 are enriched in basic residues; the sequence is KKKKKKKRKKK. Residues 86-106 form a helical; Signal-anchor for type II membrane protein membrane-spanning segment; sequence VLAFAVSLVALLAVTMLAVLL. At 107–1069 the chain is on the extracellular side; that stretch reads SLRFDECGAS…FQWLGKALRH (963 aa). A disordered region spans residues 117-179; the sequence is ATPGADGGPS…PSEEEREPWE (63 aa). A compositionally biased stretch (gly residues) spans 121–136; that stretch reads ADGGPSGFPERGGNGS. Asparagine 134, asparagine 205, asparagine 220, asparagine 267, and asparagine 383 each carry an N-linked (GlcNAc...) asparagine glycan. 449–453 contacts substrate; it reads AAMEN. Histidine 485 provides a ligand contact to Zn(2+). The Proton acceptor role is filled by glutamate 486. Residues histidine 489 and glutamate 508 each coordinate Zn(2+). N-linked (GlcNAc...) asparagine glycosylation is found at asparagine 650, asparagine 679, asparagine 694, asparagine 708, asparagine 729, asparagine 845, and asparagine 951.

Belongs to the peptidase M1 family. As to quaternary structure, homodimer; disulfide-linked. Zn(2+) is required as a cofactor. Predominantly expressed in brain.

It localises to the membrane. The catalysed reaction is Release of the N-terminal pyroglutamyl group from pGlu-|-His-Xaa tripeptides and pGlu-|-His-Xaa-Gly tetrapeptides.. In terms of biological role, specific inactivation of TRH after its release. This chain is Thyrotropin-releasing hormone-degrading ectoenzyme (TRHDE), found in Homo sapiens (Human).